Consider the following 749-residue polypeptide: Tryptophan 2-monooxygenase (749 aa).

FMN contacts are provided by Ser232, Glu252, Lys260, and Arg280. Arg280 is a substrate binding site.

This sequence belongs to the tryptophan 2-monooxygenase family. FMN serves as cofactor.

The enzyme catalyses L-tryptophan + O2 = indole-3-acetamide + CO2 + H2O. It functions in the pathway plant hormone metabolism; auxin biosynthesis. In Rhizobium rhizogenes (Agrobacterium rhizogenes), this protein is Tryptophan 2-monooxygenase (aux1).